Reading from the N-terminus, the 116-residue chain is CDKN2AIP N-terminal-like protein (116 aa).

M1 is modified (N-acetylmethionine). The 93-residue stretch at 24–116 (AEQFRSYSES…RSELMRKHQS (93 aa)) folds into the XRN2-binding (XTBD) domain.

Belongs to the CARF family. In terms of assembly, interacts with XRN2; the interaction is direct.

This Mus musculus (Mouse) protein is CDKN2AIP N-terminal-like protein (Cdkn2aipnl).